Consider the following 745-residue polypeptide: Immunoglobulin superfamily containing leucine-rich repeat protein 2 (745 aa).

A signal peptide spans 1–19 (MGPFGALCLAWALLGVVRA). Positions 20–51 (CPEPCACVDKYAHQFADCAYKELREVPEGLPA) constitute an LRRNT domain. At 20 to 589 (CPEPCACVDK…VFSTKKELPS (570 aa)) the chain is on the extracellular side. Residues Asn-52 and Asn-73 are each glycosylated (N-linked (GlcNAc...) asparagine). 5 LRR repeats span residues 52-73 (NVTT…AFVN), 76-97 (QVTS…ALAV), 100-123 (QLKN…RNLS), 124-145 (ALQL…ALGA), and 148-169 (DLRS…TFDA). Asn-121 is a glycosylation site (N-linked (GlcNAc...) asparagine). Residues 181-232 (NPFHCSCGLVWLQAWAASTRVSLPEPDSIACASPPELQGVPVHRLPALPCAP) form the LRRCT domain. The region spanning 233–372 (PSVRLSAEPP…GTNSTSLRVT (140 aa)) is the Ig-like domain. A disulfide bond links Cys-260 and Cys-356. Residues 290 to 300 (KEEDGGDKVED) show a composition bias toward basic and acidic residues. A disordered region spans residues 290–328 (KEEDGGDKVEDGEGDGDEDLPTQTEAPTPTPAPAWPAPP). The span at 317–328 (TPTPAPAWPAPP) shows a compositional bias: pro residues. 2 N-linked (GlcNAc...) asparagine glycosylation sites follow: Asn-338 and Asn-365. The tract at residues 376 to 423 (AGPPKHAPGTGEEPDAQVPTSERKATTKGRSNSVLPFKPEGKTKGQGL) is disordered. 2 N-linked (GlcNAc...) asparagine glycosylation sites follow: Asn-474 and Asn-563. A helical membrane pass occupies residues 590–610 (LLVIVTVSVFLLVLATVPLLG). Topologically, residues 611-745 (AACCHLLAKH…INGNYRQTAG (135 aa)) are cytoplasmic. A disordered region spans residues 654–697 (SEKSYPARGEAGGEEPEEVPEEGLDEDVEQGDPSGDLQREESLA). Residues 665-683 (GGEEPEEVPEEGLDEDVEQ) show a composition bias toward acidic residues. At Tyr-719 the chain carries Phosphotyrosine. Ser-720 is modified (phosphoserine).

As to quaternary structure, homomultimer. Interacts with NTRK1/TrkA. At 11.5 dpc, expressed in spinal nerves, their roots and the ventral spinal cord. At 12.5 dpc, detected in the ventral spinal cord, dorsal root ganglia (DRG), dorsal and ventral roots and sympathetic chain ganglia. At 12.5 dpc, expressed in almost all motor neurons which also express RET and in almost all DRG sensory neurons which also express NTRK1. At 18.5 dpc, expressed only in a subset of NTRK1-expressing neurons but still expressed in nearly all RET-expressing neurons.

The protein localises to the cell membrane. Its function is as follows. Required for axon extension during neural development. The sequence is that of Immunoglobulin superfamily containing leucine-rich repeat protein 2 (Islr2) from Mus musculus (Mouse).